Reading from the N-terminus, the 206-residue chain is dITP/XTP pyrophosphatase (206 aa).

A substrate-binding site is contributed by 7–12 (SNNAKK). Catalysis depends on Asp-72, which acts as the Proton acceptor. A Mg(2+)-binding site is contributed by Asp-72. Substrate contacts are provided by residues Ser-73, 155–158 (FGYD), Lys-182, and 187–188 (HR).

Belongs to the HAM1 NTPase family. In terms of assembly, homodimer. The cofactor is Mg(2+).

The enzyme catalyses XTP + H2O = XMP + diphosphate + H(+). The catalysed reaction is dITP + H2O = dIMP + diphosphate + H(+). It catalyses the reaction ITP + H2O = IMP + diphosphate + H(+). Its function is as follows. Pyrophosphatase that catalyzes the hydrolysis of nucleoside triphosphates to their monophosphate derivatives, with a high preference for the non-canonical purine nucleotides XTP (xanthosine triphosphate), dITP (deoxyinosine triphosphate) and ITP. Seems to function as a house-cleaning enzyme that removes non-canonical purine nucleotides from the nucleotide pool, thus preventing their incorporation into DNA/RNA and avoiding chromosomal lesions. This chain is dITP/XTP pyrophosphatase, found in Corynebacterium glutamicum (strain ATCC 13032 / DSM 20300 / JCM 1318 / BCRC 11384 / CCUG 27702 / LMG 3730 / NBRC 12168 / NCIMB 10025 / NRRL B-2784 / 534).